A 604-amino-acid polypeptide reads, in one-letter code: Glutamyl-tRNA(Gln) amidotransferase subunit B, mitochondrial (604 aa).

The transit peptide at 1–48 directs the protein to the mitochondrion; sequence MIRQCLSRRGAYSRYRLAARGVELAEPFHHQSSRPQGRRNWSSSPRCS. Residues 28-57 are disordered; sequence FHHQSSRPQGRRNWSSSPRCSLDIRTDTPR. Positions 33 to 46 are enriched in polar residues; that stretch reads SRPQGRRNWSSSPR.

The protein belongs to the GatB/GatE family. GatB subfamily. In terms of assembly, subunit of the heterotrimeric GatCAB amidotransferase (AdT) complex, composed of A, B and C subunits.

It localises to the mitochondrion. It catalyses the reaction L-glutamyl-tRNA(Gln) + L-glutamine + ATP + H2O = L-glutaminyl-tRNA(Gln) + L-glutamate + ADP + phosphate + H(+). Allows the formation of correctly charged Gln-tRNA(Gln) through the transamidation of misacylated Glu-tRNA(Gln) in the mitochondria. The reaction takes place in the presence of glutamine and ATP through an activated gamma-phospho-Glu-tRNA(Gln). In Ajellomyces dermatitidis (strain ER-3 / ATCC MYA-2586) (Blastomyces dermatitidis), this protein is Glutamyl-tRNA(Gln) amidotransferase subunit B, mitochondrial.